Here is a 207-residue protein sequence, read N- to C-terminus: Dephospho-CoA kinase (207 aa).

The DPCK domain maps to 10–207 (ILGLTGGIGS…FYLTLRGGQS (198 aa)). Residue 18-23 (GSGKSA) participates in ATP binding.

Belongs to the CoaE family.

It localises to the cytoplasm. It carries out the reaction 3'-dephospho-CoA + ATP = ADP + CoA + H(+). It participates in cofactor biosynthesis; coenzyme A biosynthesis; CoA from (R)-pantothenate: step 5/5. Its function is as follows. Catalyzes the phosphorylation of the 3'-hydroxyl group of dephosphocoenzyme A to form coenzyme A. In Pseudomonas savastanoi pv. phaseolicola (strain 1448A / Race 6) (Pseudomonas syringae pv. phaseolicola (strain 1448A / Race 6)), this protein is Dephospho-CoA kinase.